A 79-amino-acid polypeptide reads, in one-letter code: UPF0291 protein SAV1341 (79 aa).

The segment at 56–79 (IDPEGNDVTPEKIKEIQQKRDNKN) is disordered. Positions 64–79 (TPEKIKEIQQKRDNKN) are enriched in basic and acidic residues.

The protein belongs to the UPF0291 family.

Its subcellular location is the cytoplasm. The polypeptide is UPF0291 protein SAV1341 (Staphylococcus aureus (strain Mu50 / ATCC 700699)).